We begin with the raw amino-acid sequence, 509 residues long: Lengsin (509 aa).

Residues 1 to 34 (MNNEEDLLQEDSTRDEGNETEANSMNTLRRTRKK) form a disordered region. Positions 83-177 (NRLQFVRFEA…VICDTFTVTG (95 aa)) constitute a GS beta-grasp domain. The region spanning 184–509 (PRYIAKRQLS…ERNKFLEYFI (326 aa)) is the GS catalytic domain.

This sequence belongs to the glutamine synthetase family. Dodecamer. Interacts with BFSP2 and VIM. In terms of tissue distribution, abundantly expressed in lens.

Its function is as follows. May act as a component of the cytoskeleton or as a chaperone for the reorganization of intermediate filament proteins during terminal differentiation in the lens. Does not seem to have enzymatic activity. This Homo sapiens (Human) protein is Lengsin (LGSN).